Here is a 243-residue protein sequence, read N- to C-terminus: uncharacterized protein (243 aa).

The tract at residues 71–120 is disordered; it reads KRTNVSQRNRKKGIKNNRPHKDINSSPDWGNAHRGTDWQSEKANGMNRAK. Over residues 78 to 88 the composition is skewed to basic residues; it reads RNRKKGIKNNR. Ser-96 bears the Phosphoserine mark.

This is an uncharacterized protein from Saccharomyces cerevisiae (strain ATCC 204508 / S288c) (Baker's yeast).